Consider the following 1033-residue polypeptide: Probable LRR receptor-like serine/threonine-protein kinase At1g56140 (1033 aa).

The signal sequence occupies residues 1 to 28 (MLRLWRYLCLLLTVWFLCNFGPVYVVRA). The Extracellular segment spans residues 29–636 (QNRTGATTHP…PSKGKSMTGT (608 aa)). Residues N30, N60, and N94 are each glycosylated (N-linked (GlcNAc...) asparagine). 13 LRR repeats span residues 97–121 (ICRI…LWTL), 122–145 (EYLT…LGNL), 147–169 (RMRW…IGLL), 170–193 (TDLR…IGRC), 195–217 (KLQQ…FANL), 241–264 (WTKL…SFSN), 265–288 (LTSL…FIKD), 289–313 (MKSL…IGEY), 314–337 (SSLR…LFNL), 339–361 (QLTH…KGQS), 363–382 (SNVD…WVSL), 383–406 (PNLN…VLSG), and 422–445 (IYSD…VFER). A glycan (N-linked (GlcNAc...) asparagine) is linked at N144. N-linked (GlcNAc...) asparagine glycosylation occurs at N181. N-linked (GlcNAc...) asparagine glycosylation is found at N264, N280, and N301. Residues N347 and N351 are each glycosylated (N-linked (GlcNAc...) asparagine). N-linked (GlcNAc...) asparagine glycosylation occurs at N393. An N-linked (GlcNAc...) asparagine glycan is attached at N579. Residues 637–657 (IVGVIVGVGLLSIISGVVIFI) traverse the membrane as a helical segment. The Cytoplasmic segment spans residues 658-1033 (IRKRRKRYTD…MLGAQMNEGR (376 aa)). The residue at position 682 (T682) is a Phosphothreonine. A Protein kinase domain is found at 693–951 (FDPSNKLGEG…LCTQTSHALR (259 aa)). Residues 699–707 (LGEGGFGPV) and K721 each bind ATP. Phosphotyrosine is present on Y766. D817 (proton acceptor) is an active-site residue. S821 and S850 each carry phosphoserine. A phosphothreonine mark is found at T851 and T856. Y864 carries the phosphotyrosine modification. Residues 1012 to 1033 (SEISPRNNDARPMLGAQMNEGR) form a disordered region.

This sequence belongs to the protein kinase superfamily. Ser/Thr protein kinase family.

It is found in the membrane. It carries out the reaction L-seryl-[protein] + ATP = O-phospho-L-seryl-[protein] + ADP + H(+). It catalyses the reaction L-threonyl-[protein] + ATP = O-phospho-L-threonyl-[protein] + ADP + H(+). This is Probable LRR receptor-like serine/threonine-protein kinase At1g56140 from Arabidopsis thaliana (Mouse-ear cress).